Reading from the N-terminus, the 192-residue chain is Shikimate kinase (192 aa).

32 to 37 provides a ligand contact to ATP; that stretch reads GAGKSA. S36 is a Mg(2+) binding site. The substrate site is built by D54, R78, and G100. ATP is bound at residue R138. R157 is a binding site for substrate.

The protein belongs to the shikimate kinase family. As to quaternary structure, monomer. The cofactor is Mg(2+).

Its subcellular location is the cytoplasm. It catalyses the reaction shikimate + ATP = 3-phosphoshikimate + ADP + H(+). The protein operates within metabolic intermediate biosynthesis; chorismate biosynthesis; chorismate from D-erythrose 4-phosphate and phosphoenolpyruvate: step 5/7. In terms of biological role, catalyzes the specific phosphorylation of the 3-hydroxyl group of shikimic acid using ATP as a cosubstrate. The chain is Shikimate kinase from Rhizobium meliloti (strain 1021) (Ensifer meliloti).